We begin with the raw amino-acid sequence, 424 residues long: UPF0229 protein Avin_46880 (424 aa).

Residues 57 to 108 (RDIDEPVLHHGRGGKQTIVHPGNKEFTAGERIPRPSGGGGGGSGSGKASNSG) are disordered. A compositionally biased stretch (gly residues) spans 92 to 101 (SGGGGGGSGS).

Belongs to the UPF0229 family.

This is UPF0229 protein Avin_46880 from Azotobacter vinelandii (strain DJ / ATCC BAA-1303).